The primary structure comprises 272 residues: Interleukin-2 receptor subunit alpha (272 aa).

Positions M1–A21 are cleaved as a signal peptide. The Sushi 1 domain maps to E22 to S84. Topologically, residues E22–Q240 are extracellular. Intrachain disulfides connect C24–C67, C49–C80, and C51–C82. N70 and N89 each carry an N-linked (GlcNAc...) asparagine glycan. Residues A87–P98 show a composition bias toward polar residues. Residues A87–M109 form a disordered region. The Sushi 2 domain occupies G123–G186. Intrachain disulfides connect C125/C168 and C152/C184. Positions G186 to R213 are disordered. Residues V241 to L259 form a helical membrane-spanning segment. Over T260–I272 the chain is Cytoplasmic.

Non-covalent dimer of an alpha and a beta subunit. IL2R exists in 3 different forms: a high affinity dimer, an intermediate affinity monomer (beta subunit), and a low affinity monomer (alpha subunit). The high and intermediate affinity forms also associate with a gamma subunit.

Its subcellular location is the membrane. Functionally, receptor for interleukin-2. The receptor is involved in the regulation of immune tolerance by controlling regulatory T cells (TREGs) activity. TREGs suppress the activation and expansion of autoreactive T-cells. This is Interleukin-2 receptor subunit alpha (IL2RA) from Macaca mulatta (Rhesus macaque).